A 179-amino-acid polypeptide reads, in one-letter code: MSEETKEEIKNEKVDEEVTEELTEEALEDIVEEEINELDEAQKLATEWENKFLRVSAEMQNVQRRGNEERLQLVKYRSQDLAKKILSSLDNLERALAVEGLTDDVKKGLEMVQESLISALKEEGVEEVSYESFDHNLHMAVQTVPADDEHPADSIVQVFQKGYQLHERLLRPAMVVVAQ.

Positions 1 to 20 (MSEETKEEIKNEKVDEEVTE) are disordered.

Belongs to the GrpE family. As to quaternary structure, homodimer.

Its subcellular location is the cytoplasm. Its function is as follows. Participates actively in the response to hyperosmotic and heat shock by preventing the aggregation of stress-denatured proteins, in association with DnaK and GrpE. It is the nucleotide exchange factor for DnaK and may function as a thermosensor. Unfolded proteins bind initially to DnaJ; upon interaction with the DnaJ-bound protein, DnaK hydrolyzes its bound ATP, resulting in the formation of a stable complex. GrpE releases ADP from DnaK; ATP binding to DnaK triggers the release of the substrate protein, thus completing the reaction cycle. Several rounds of ATP-dependent interactions between DnaJ, DnaK and GrpE are required for fully efficient folding. The sequence is that of Protein GrpE from Lactococcus lactis subsp. cremoris (strain MG1363).